A 94-amino-acid polypeptide reads, in one-letter code: Selenoprotein K (94 aa).

Residues Leu20 to Leu42 traverse the membrane as a helical segment. The disordered stretch occupies residues Lys48 to Arg94. Residue Sec92 is a non-standard amino acid, selenocysteine.

It belongs to the selenoprotein K family. In terms of assembly, interacts with DERL1, DERL2, DERL3 and SELENOS. The SELENOK-SELENOS complex interacts with VCP. Interacts with ZDHHC6. Post-translationally, cleaved by CAPN2/m-calpain in resting macrophages but not in activated macrophages. Macrophage activation up-regulates expression of the calpain inhibitor CAST/calpastatin, resulting in inhibition of CAPN2 activity. In terms of processing, truncated SELENOK proteins produced by failed UGA/Sec decoding are ubiquitinated by the CRL2(KLHDC2) complex, which recognizes the diglycine (Gly-Gly) at the C-terminus of truncated SELENOK proteins.

The protein resides in the endoplasmic reticulum membrane. The protein localises to the cell membrane. In terms of biological role, required for Ca(2+) flux in immune cells and plays a role in T-cell proliferation and in T-cell and neutrophil migration. Involved in endoplasmic reticulum-associated degradation (ERAD) of soluble glycosylated proteins. Required for palmitoylation and cell surface expression of CD36 and involved in macrophage uptake of low-density lipoprotein and in foam cell formation. Together with ZDHHC6, required for palmitoylation of ITPR1 in immune cells, leading to regulate ITPR1 stability and function. Plays a role in protection of cells from ER stress-induced apoptosis. Protects cells from oxidative stress when overexpressed in cardiomyocytes. The sequence is that of Selenoprotein K from Sus scrofa (Pig).